The following is a 103-amino-acid chain: Large ribosomal subunit protein bL21 (103 aa).

The protein belongs to the bacterial ribosomal protein bL21 family. Part of the 50S ribosomal subunit. Contacts protein L20.

This protein binds to 23S rRNA in the presence of protein L20. This is Large ribosomal subunit protein bL21 from Acidovorax ebreus (strain TPSY) (Diaphorobacter sp. (strain TPSY)).